Here is a 164-residue protein sequence, read N- to C-terminus: MTPVRLGVLAGIVALVLDQVTKLWLLYGFELARKGVVQVLPFFDLVLAWNTGISYGWFSGQGPTGQILMLAFKAVAIVALAIWMARSTTKLATIGLGLIIGGAIGNAIDRLAYGAVVDFALLHAEIGGKIYNWYVFNIADVAIVVGVAALLYDSLIGLPAAKAP.

The next 4 membrane-spanning stretches (helical) occupy residues 6 to 26, 39 to 59, 65 to 85, and 88 to 108; these read LGVLAGIVALVLDQVTKLWLL, VLPFFDLVLAWNTGISYGWFS, GQILMLAFKAVAIVALAIWMA, and TTKLATIGLGLIIGGAIGNAI. Catalysis depends on residues Asp118 and Asp140. A helical membrane pass occupies residues 141–161; that stretch reads VAIVVGVAALLYDSLIGLPAA.

It belongs to the peptidase A8 family.

It is found in the cell inner membrane. The enzyme catalyses Release of signal peptides from bacterial membrane prolipoproteins. Hydrolyzes -Xaa-Yaa-Zaa-|-(S,diacylglyceryl)Cys-, in which Xaa is hydrophobic (preferably Leu), and Yaa (Ala or Ser) and Zaa (Gly or Ala) have small, neutral side chains.. It participates in protein modification; lipoprotein biosynthesis (signal peptide cleavage). In terms of biological role, this protein specifically catalyzes the removal of signal peptides from prolipoproteins. This Rhodopseudomonas palustris (strain ATCC BAA-98 / CGA009) protein is Lipoprotein signal peptidase.